The chain runs to 216 residues: Probable nicotinate-nucleotide adenylyltransferase (216 aa).

Belongs to the NadD family.

The catalysed reaction is nicotinate beta-D-ribonucleotide + ATP + H(+) = deamido-NAD(+) + diphosphate. Its pathway is cofactor biosynthesis; NAD(+) biosynthesis; deamido-NAD(+) from nicotinate D-ribonucleotide: step 1/1. Catalyzes the reversible adenylation of nicotinate mononucleotide (NaMN) to nicotinic acid adenine dinucleotide (NaAD). This is Probable nicotinate-nucleotide adenylyltransferase from Maridesulfovibrio salexigens (strain ATCC 14822 / DSM 2638 / NCIMB 8403 / VKM B-1763) (Desulfovibrio salexigens).